A 1205-amino-acid polypeptide reads, in one-letter code: A disintegrin and metalloproteinase with thrombospondin motifs 2 (1205 aa).

An N-terminal signal peptide occupies residues 1–28 (MDPPAGAAGRLLCPALLLLLLLPLPADA). Residues 29-253 (RLAAAAADPP…VNSSRRRMRR (225 aa)) constitute a propeptide that is removed on maturation. 2 N-linked (GlcNAc...) asparagine glycosylation sites follow: Asn104 and Asn245. The Peptidase M12B domain occupies 260–464 (YNIEVLLGVD…HSYDCLRDDP (205 aa)). Disulfide bonds link Cys337-Cys386, Cys380-Cys459, Cys419-Cys445, Cys486-Cys511, Cys497-Cys520, Cys506-Cys539, Cys533-Cys544, Cys567-Cys604, Cys571-Cys609, and Cys582-Cys594. His402 contacts Zn(2+). Residue Glu403 is part of the active site. Residues His406 and His412 each coordinate Zn(2+). The Disintegrin domain maps to 474-554 (QLPGLHYSMN…IWLTPDILKR (81 aa)). In terms of domain architecture, TSP type-1 1 spans 555–610 (DGNWGAWSPFGSCSRTCGTGVKFRTRQCDNPHPANGGRTCSGLAYDFQLCNSQDCP). The Cell attachment site motif lies at 685–687 (RGD). The tract at residues 717–845 (KVVKGTFSRS…NVDDNNVLED (129 aa)) is spacer. TSP type-1 domains follow at residues 848–906 (VGYE…NPQE), 908–968 (SQPV…NREL), and 969–1023 (CPGR…GPCP). Residues Asn942, Asn943, and Asn987 are each glycosylated (N-linked (GlcNAc...) asparagine). 3 cysteine pairs are disulfide-bonded: Cys981/Cys1017, Cys985/Cys1022, and Cys996/Cys1006. Residue Asn1025 is glycosylated (N-linked (GlcNAc...) asparagine). The PLAC domain occupies 1053–1091 (SKGRCQGDKSVFCRMEVLSRYCSIPGYNKLCCKSCNPHD). N-linked (GlcNAc...) asparagine glycans are attached at residues Asn1092, Asn1139, and Asn1144. Residues 1163–1184 (GLEDEVQPPNLIPRRPSPYEKT) form a disordered region.

May belong to a multimeric complex. Binds specifically to collagen type XIV. Requires Zn(2+) as cofactor. The N-terminus is blocked. In terms of processing, the precursor is cleaved by a furin endopeptidase. Post-translationally, glycosylated. Can be O-fucosylated by POFUT2 on a serine or a threonine residue found within the consensus sequence C1-X(2)-(S/T)-C2-G of the TSP type-1 repeat domains where C1 and C2 are the first and second cysteine residue of the repeat, respectively. Fucosylated repeats can then be further glycosylated by the addition of a beta-1,3-glucose residue by the glucosyltransferase, B3GALTL. Fucosylation mediates the efficient secretion of ADAMTS family members. Can also be C-glycosylated with one or two mannose molecules on tryptophan residues within the consensus sequence W-X-X-W of the TPRs, and N-glycosylated. These other glycosylations can also facilitate secretion. In terms of tissue distribution, enzymatic activity is detected at high level in all type I collagen-rich tissues such as skin, bones, tendons and aorta and at low level in brain and thymus. The mRNA levels were disproportionately high in heart, liver, retina and muscle.

The protein resides in the secreted. Its subcellular location is the extracellular space. It is found in the extracellular matrix. The enzyme catalyses Cleaves the N-propeptide of collagen chain alpha1(I) at Pro-|-Gln and of alpha1(II) and alpha2(I) at Ala-|-Gln.. Functionally, cleaves the propeptides of type I and II collagen prior to fibril assembly. Does not act on type III collagen. Cleaves lysyl oxidase LOX at a site downstream of its propeptide cleavage site to produce a short LOX form with reduced collagen-binding activity. The polypeptide is A disintegrin and metalloproteinase with thrombospondin motifs 2 (ADAMTS2) (Bos taurus (Bovine)).